A 249-amino-acid polypeptide reads, in one-letter code: tRNA (guanine-N(1)-)-methyltransferase (249 aa).

Residues G118 and 138–143 (IGDYVL) contribute to the S-adenosyl-L-methionine site.

The protein belongs to the RNA methyltransferase TrmD family. As to quaternary structure, homodimer.

The protein resides in the cytoplasm. It carries out the reaction guanosine(37) in tRNA + S-adenosyl-L-methionine = N(1)-methylguanosine(37) in tRNA + S-adenosyl-L-homocysteine + H(+). In terms of biological role, specifically methylates guanosine-37 in various tRNAs. This chain is tRNA (guanine-N(1)-)-methyltransferase, found in Alkaliphilus oremlandii (strain OhILAs) (Clostridium oremlandii (strain OhILAs)).